A 180-amino-acid chain; its full sequence is NADH-quinone oxidoreductase subunit I (180 aa).

4Fe-4S ferredoxin-type domains lie at 50 to 80 (LTRN…LQKS) and 90 to 119 (KFFR…LMPD). [4Fe-4S] cluster contacts are provided by Cys-60, Cys-63, Cys-66, Cys-70, Cys-99, Cys-102, Cys-105, and Cys-109.

It belongs to the complex I 23 kDa subunit family. NDH-1 is composed of 13 different subunits. Subunits NuoA, H, J, K, L, M, N constitute the membrane sector of the complex. The cofactor is [4Fe-4S] cluster.

The protein resides in the cell membrane. It catalyses the reaction a quinone + NADH + 5 H(+)(in) = a quinol + NAD(+) + 4 H(+)(out). In terms of biological role, NDH-1 shuttles electrons from NADH, via FMN and iron-sulfur (Fe-S) centers, to quinones in the respiratory chain. The immediate electron acceptor for the enzyme in this species is believed to be ubiquinone. Couples the redox reaction to proton translocation (for every two electrons transferred, four hydrogen ions are translocated across the cytoplasmic membrane), and thus conserves the redox energy in a proton gradient. This Buchnera aphidicola subsp. Acyrthosiphon pisum (strain APS) (Acyrthosiphon pisum symbiotic bacterium) protein is NADH-quinone oxidoreductase subunit I.